Reading from the N-terminus, the 420-residue chain is Uteroferrin-associated basic protein 2 (420 aa).

An N-terminal signal peptide occupies residues 1-25; it reads MSHGKMPLVLSLVLILCGLFNSISC. 3 N-linked (GlcNAc...) asparagine glycosylation sites follow: Asn-225, Asn-271, and Asn-343.

Belongs to the serpin family. UTMP subfamily.

The protein localises to the secreted. Its subcellular location is the extracellular space. In Sus scrofa (Pig), this protein is Uteroferrin-associated basic protein 2.